Here is a 1889-residue protein sequence, read N- to C-terminus: Treslin (1889 aa).

Phosphoserine is present on residues Ser295, Ser599, Ser820, Ser861, Ser919, Ser934, Ser1002, Ser1027, and Ser1078. Low complexity predominate over residues 812-832 (DSMSQESMSPPPSSSTHRSVS). Positions 812–836 (DSMSQESMSPPPSSSTHRSVSAITE) are disordered. The tract at residues 979-1063 (RLLHRQIKGR…RENFPVQSIQ (85 aa)) is disordered. Over residues 1020–1050 (LSFSRTNSGSFYSVSQPKSRSVQRIHSSQQE) the composition is skewed to polar residues. 6 disordered regions span residues 1098–1421 (EIST…SQFS), 1471–1508 (LPGE…SSSE), 1520–1543 (GKQR…SPQT), 1630–1714 (SCTP…SLEQ), 1730–1751 (VCQL…ETSW), and 1841–1875 (QGRT…TLSR). Residues 1127 to 1179 (TAQTLLYTPERLQNSPTEMTSAEGTISEATIKTPSSHGYNSPFASKVTSQKTV) show a composition bias toward polar residues. Thr1134 carries the phosphothreonine modification. Residue Ser1141 is modified to Phosphoserine. Low complexity predominate over residues 1187 to 1197 (SPPLTKLPSTP). Positions 1203 to 1219 (QPPQCSSDCTWPHSVNS) are enriched in polar residues. The segment covering 1339 to 1351 (TSPSVTSSVSCPV) has biased composition (low complexity). Basic residues predominate over residues 1373–1382 (KLRRSCRKKS). Ser1406 carries the post-translational modification Phosphoserine. Positions 1496 to 1508 (LVPAPSSVSSSSE) are enriched in low complexity. 2 stretches are compositionally biased toward polar residues: residues 1525–1543 (DAAQ…SPQT) and 1652–1662 (WTPSPKQSGKT). Over residues 1705–1714 (PEGKERSLEQ) the composition is skewed to basic and acidic residues.

The protein belongs to the treslin family. In terms of assembly, interacts with TOPBP1 (via BRCT domains); interaction takes place in a CDK2-dependent manner. Component of the replisome complex composed of at least DONSON, MCM2, MCM7, PCNA and TICRR.

The protein resides in the nucleus. Regulator of DNA replication and S/M and G2/M checkpoints. Regulates the triggering of DNA replication initiation via its interaction with TOPBP1 by participating in CDK2-mediated loading of CDC45L onto replication origins. Required for the transition from pre-replication complex (pre-RC) to pre-initiation complex (pre-IC). Required to prevent mitotic entry after treatment with ionizing radiation. This chain is Treslin (Ticrr), found in Mus musculus (Mouse).